The following is a 312-amino-acid chain: Methionyl-tRNA formyltransferase (312 aa).

(6S)-5,6,7,8-tetrahydrofolate is bound at residue 109 to 112 (SLLP).

It belongs to the Fmt family.

It carries out the reaction L-methionyl-tRNA(fMet) + (6R)-10-formyltetrahydrofolate = N-formyl-L-methionyl-tRNA(fMet) + (6S)-5,6,7,8-tetrahydrofolate + H(+). Its function is as follows. Attaches a formyl group to the free amino group of methionyl-tRNA(fMet). The formyl group appears to play a dual role in the initiator identity of N-formylmethionyl-tRNA by promoting its recognition by IF2 and preventing the misappropriation of this tRNA by the elongation apparatus. The chain is Methionyl-tRNA formyltransferase from Listeria welshimeri serovar 6b (strain ATCC 35897 / DSM 20650 / CCUG 15529 / CIP 8149 / NCTC 11857 / SLCC 5334 / V8).